Here is a 395-residue protein sequence, read N- to C-terminus: Torsin-3A (395 aa).

The N-terminal stretch at 1–24 (MFFGAFWLLLLLLLPPLRPPGAQG) is a signal peptide. A glycan (N-linked (GlcNAc...) asparagine) is linked at Asn-120. Position 165 to 172 (165 to 172 (GWSGTGKN)) interacts with ATP.

Belongs to the ClpA/ClpB family. Torsin subfamily. May not form homohexamers. N-glycosylated.

Its subcellular location is the cytoplasm. The protein resides in the endoplasmic reticulum lumen. In Rattus norvegicus (Rat), this protein is Torsin-3A (Tor3a).